The following is a 397-amino-acid chain: Putative gustatory receptor 93c (397 aa).

At 1–12 (MIERLKKVSLPA) the chain is on the cytoplasmic side. The helical transmembrane segment at 13 to 33 (LSAFILFCSCHYGRILGVICF) threads the bilayer. The Extracellular segment spans residues 34 to 87 (DIGQRTSDDSLVVRNRHQFKWFCLSCRLISVTAVCCFCAPYVADIEDPYERLLQ). The helical transmembrane segment at 88–108 (CFRLSASLICGICIIVVQVCY) threads the bilayer. Over 109–141 (EKELLRMIISFLRLFRRVRRLSSLKRIGFGGKR) the chain is Cytoplasmic. Residues 142-162 (EFFLLLFKFICLVYELYSEIC) traverse the membrane as a helical segment. Topologically, residues 163 to 179 (QLWHLPDSLSLFATLCE) are extracellular. Residues 180–200 (IFLEIGSLMIIHIGFVGYLSV) form a helical membrane-spanning segment. The Cytoplasmic segment spans residues 201–266 (AALYSEVNSF…RTFHRLLELP (66 aa)). The helical transmembrane segment at 267–287 (VLIILLGKIFATTILSYEVII) threads the bilayer. Over 288–295 (RPELYARK) the chain is Extracellular. The chain crosses the membrane as a helical span at residues 296–316 (IGMWGLVVKSFADVILLTLAV). Residues 317-371 (HEAVSSSRMMRRLSLENFPITDHKAWHMKWEMFLSRLNFFEFRVRPLGLFEVSNE) are Cytoplasmic-facing. The chain crosses the membrane as a helical span at residues 372-392 (VILLFLSSMITYFTYVVQYGI). Over 393-397 (QTNRL) the chain is Extracellular.

The protein belongs to the insect chemoreceptor superfamily. Gustatory receptor (GR) family. Gr93a subfamily. In larvae, is expressed in neurons of the posterior pharyngeal sense organ.

The protein resides in the cell membrane. In terms of biological role, probable gustatory receptor which mediates acceptance or avoidance behavior, depending on its substrates. The sequence is that of Putative gustatory receptor 93c (Gr93c) from Drosophila melanogaster (Fruit fly).